Here is a 157-residue protein sequence, read N- to C-terminus: Protein Smg homolog (157 aa).

The protein belongs to the Smg family.

This is Protein Smg homolog from Shewanella putrefaciens (strain CN-32 / ATCC BAA-453).